The chain runs to 238 residues: Uridylate kinase (238 aa).

11–14 (KLSG) is a binding site for ATP. Gly-52 contributes to the UMP binding site. ATP-binding residues include Gly-53 and Arg-57. UMP-binding positions include Asp-72 and 134–141 (TGFSYFTT). Residues Asn-162, Tyr-168, and Asp-171 each coordinate ATP.

This sequence belongs to the UMP kinase family. In terms of assembly, homohexamer.

It localises to the cytoplasm. The enzyme catalyses UMP + ATP = UDP + ADP. It participates in pyrimidine metabolism; CTP biosynthesis via de novo pathway; UDP from UMP (UMPK route): step 1/1. Inhibited by UTP. Catalyzes the reversible phosphorylation of UMP to UDP. The sequence is that of Uridylate kinase from Mesoplasma florum (strain ATCC 33453 / NBRC 100688 / NCTC 11704 / L1) (Acholeplasma florum).